Here is a 139-residue protein sequence, read N- to C-terminus: Thioredoxin-like protein Clot (139 aa).

The region spanning 1 to 136 is the Thioredoxin domain; sequence MTVEKVDATV…LADKVDAVVN (136 aa). Active-site nucleophile residues include C49 and C52. A disulfide bond links C49 and C52.

This sequence belongs to the thioredoxin family.

In terms of biological role, probable thiol-disulfide oxidoreductase that may participate in various redox reactions. In Oryza sativa subsp. japonica (Rice), this protein is Thioredoxin-like protein Clot.